We begin with the raw amino-acid sequence, 117 residues long: Hydrogenase maturation factor HypA (117 aa).

His2 contacts Ni(2+). Zn(2+) contacts are provided by Cys73, Cys76, Cys89, and Cys92.

It belongs to the HypA/HybF family.

Its function is as follows. Involved in the maturation of [NiFe] hydrogenases. Required for nickel insertion into the metal center of the hydrogenase. The polypeptide is Hydrogenase maturation factor HypA (Pelodictyon phaeoclathratiforme (strain DSM 5477 / BU-1)).